The chain runs to 916 residues: Transmembrane channel-like protein 2-A (916 aa).

Residues 1–13 are compositionally biased toward basic and acidic residues; sequence MPKKSDTTRKLED. The interval 1–159 is disordered; that stretch reads MPKKSDTTRK…DEEDESMSEG (159 aa). Over 1–271 the chain is Cytoplasmic; the sequence is MPKKSDTTRK…IFLRWMYGMN (271 aa). Over residues 14-26 the composition is skewed to acidic residues; that stretch reads VGIEIDGDVDSAE. Basic residues-rich tracts occupy residues 31–45 and 62–72; these read SKGK…GKRG and KGRRAANKKKP. Basic and acidic residues predominate over residues 97-107; sequence NVRERGDGDKK. Over residues 108–117 the composition is skewed to basic residues; sequence KSGKKGRRGG. Residues 118–138 show a composition bias toward basic and acidic residues; the sequence is KKNEKGKGKDSDKDSDKDEKK. The span at 145 to 157 shows a compositional bias: acidic residues; the sequence is DESDSDEEDESMS. The helical transmembrane segment at 272–292 threads the bilayer; it reads LVLFSLTFGLVVIPEVLMGLP. Over 293-344 the chain is Extracellular; it reads YGSIPRKTVPREDQDTAMDYSVLTDFNGYCKYSVLFYGYYNNQRTIGFLKFR. A helical membrane pass occupies residues 345–365; sequence LPLSYLMVGIGTFGYSLMVVI. Residues 366 to 438 are Cytoplasmic-facing; the sequence is RTMAKNADVG…ENIHLRRFLR (73 aa). Residues 439-459 form a helical membrane-spanning segment; it reads VLANFLITCTLGGSGYLIYFV. At 460–478 the chain is on the extracellular side; that stretch reads VKRSQEFQNMDNLSWYEKN. Residues 479–499 traverse the membrane as a helical segment; it reads ELEIIMSLLGLVGPMLFETIA. Residues 500–516 are Cytoplasmic-facing; the sequence is ELEEYHPRIALKWQLGR. A helical membrane pass occupies residues 517–537; the sequence is IFALFLGNLYTFLLALFDEVN. Residues 538–649 are Extracellular-facing; it reads AKLEEEESIK…EFDISGNVLG (112 aa). Residues 650 to 670 form a helical membrane-spanning segment; the sequence is LVFNQGMIWMGAFYAPGLVGI. Residues 671 to 704 lie on the Cytoplasmic side of the membrane; it reads NVLRLLSSMYYQCWAVMACNVPHERVFKASKSNN. A helical membrane pass occupies residues 705-725; sequence FYMGLLLLILFLSLLPVVYTI. Residues 726–762 lie on the Extracellular side of the membrane; sequence MSLPPSFDCGPFSGKERMFDVVMETIDLDLPAFMGTL. Residues 763–783 traverse the membrane as a helical segment; that stretch reads FGYVANPGLVISAVLLMVLAI. The Cytoplasmic portion of the chain corresponds to 784–916; the sequence is YYLNSVSEAY…RGQGPPPRRQ (133 aa). Residues 804–818 show a composition bias toward basic and acidic residues; the sequence is MQMARDEEKNRRNNK. A disordered region spans residues 804–916; it reads MQMARDEEKN…RGQGPPPRRQ (113 aa). The segment covering 883–892 has biased composition (low complexity); sequence ARGPVTRAPG.

It belongs to the TMC family. As to quaternary structure, interacts (via N-terminus) with both isoforms CD1 and CD3 of PCDH15A (via cytoplasmic domain); this interaction is required for mechanotransduction of the hair cells and correct localization of PCDH15A in hair bundles of the hair cells. In terms of tissue distribution, in adults, expression is restricted to the hair cells of inner ear and lateral line organ. Expressed at higher levels in the larval inner ear than in the lateral-line neuromasts.

It is found in the cell membrane. It carries out the reaction Ca(2+)(in) = Ca(2+)(out). Its function is as follows. Pore-forming subunit of the mechanotransducer (MET) non-selective cation channel complex located at tips of hair-cell stereocilia. Highly permeable to calcium and likely transports monovalent cations. The polypeptide is Transmembrane channel-like protein 2-A (Danio rerio (Zebrafish)).